Reading from the N-terminus, the 77-residue chain is Distinctin-like peptide (77 aa).

Residues 1-19 (LKKSLFLVTFLALVPLFLC) form the signal peptide. A propeptide spanning residues 20–39 (EEEKREEENEERQDDDQSEE) is cleaved from the precursor.

Belongs to the frog skin active peptide (FSAP) family. As to expression, expressed by the skin glands.

The protein localises to the secreted. Its function is as follows. Has antimicrobial activity. In Pithecopus azureus (Orange-legged monkey tree frog), this protein is Distinctin-like peptide.